Here is a 1401-residue protein sequence, read N- to C-terminus: DNA-directed RNA polymerase subunit beta' (1401 aa).

The Zn(2+) site is built by C70, C72, C85, and C88. Positions 460, 462, and 464 each coordinate Mg(2+). Zn(2+) contacts are provided by C808, C882, C889, and C892.

This sequence belongs to the RNA polymerase beta' chain family. The RNAP catalytic core consists of 2 alpha, 1 beta, 1 beta' and 1 omega subunit. When a sigma factor is associated with the core the holoenzyme is formed, which can initiate transcription. The cofactor is Mg(2+). Requires Zn(2+) as cofactor.

The enzyme catalyses RNA(n) + a ribonucleoside 5'-triphosphate = RNA(n+1) + diphosphate. Functionally, DNA-dependent RNA polymerase catalyzes the transcription of DNA into RNA using the four ribonucleoside triphosphates as substrates. This Legionella pneumophila subsp. pneumophila (strain Philadelphia 1 / ATCC 33152 / DSM 7513) protein is DNA-directed RNA polymerase subunit beta'.